Here is a 485-residue protein sequence, read N- to C-terminus: MLLLELKKTNQTLETIHFIGIGGVGMSGIAEILYNLGYKVQGSDLVENYNTKRLESYGIKIFLGHAEQNITNVSYVVISSAINPKNPEIKEALERKIPIIRRADMLAELMRLKCSVAVSGSHGKTTTTSLVACLFEAAGLCPTVINGGIINNKSTNAYLGSSNYLIAEADESDATFIHIPSTIAIITNIDPEHLDYYRDFETLIGAFRSFITNLPFYGFAVCCIDHKIVRKLVDEITERKIVTYGIDSEDAHIIAFNINTDIASSTFDVKISLPNVLGTTIIEKITIPTPGRHNILNSLAAIAVGIELDFGIKAIKNGFNNFKGVKRRFTKVAEYNNASIIDDYAHHPEEIKATLATAKNIANKQNGKVIAIFQPHRYSRMQYLFDDFMLCFADADILYITDIYAAGENPIEGITGRSLVDKITKRKHHDKANFLAELDDAVGVIIDNAASGDMIIMMGAGNISSFANELDGRLSSRGFSCHTVV.

Residue 120–126 (GSHGKTT) coordinates ATP.

The protein belongs to the MurCDEF family.

The protein localises to the cytoplasm. It catalyses the reaction UDP-N-acetyl-alpha-D-muramate + L-alanine + ATP = UDP-N-acetyl-alpha-D-muramoyl-L-alanine + ADP + phosphate + H(+). It functions in the pathway cell wall biogenesis; peptidoglycan biosynthesis. Its function is as follows. Cell wall formation. The sequence is that of UDP-N-acetylmuramate--L-alanine ligase from Rickettsia rickettsii (strain Iowa).